The sequence spans 175 residues: Peptide deformylase (175 aa).

Residues C96 and H138 each coordinate Fe cation. E139 is an active-site residue. H142 provides a ligand contact to Fe cation.

This sequence belongs to the polypeptide deformylase family. It depends on Fe(2+) as a cofactor.

The enzyme catalyses N-terminal N-formyl-L-methionyl-[peptide] + H2O = N-terminal L-methionyl-[peptide] + formate. In terms of biological role, removes the formyl group from the N-terminal Met of newly synthesized proteins. Requires at least a dipeptide for an efficient rate of reaction. N-terminal L-methionine is a prerequisite for activity but the enzyme has broad specificity at other positions. The protein is Peptide deformylase of Rhodopseudomonas palustris (strain BisB5).